Consider the following 345-residue polypeptide: Phosphoribosylformylglycinamidine cyclo-ligase (345 aa).

Belongs to the AIR synthase family.

It is found in the cytoplasm. The enzyme catalyses 2-formamido-N(1)-(5-O-phospho-beta-D-ribosyl)acetamidine + ATP = 5-amino-1-(5-phospho-beta-D-ribosyl)imidazole + ADP + phosphate + H(+). It participates in purine metabolism; IMP biosynthesis via de novo pathway; 5-amino-1-(5-phospho-D-ribosyl)imidazole from N(2)-formyl-N(1)-(5-phospho-D-ribosyl)glycinamide: step 2/2. The chain is Phosphoribosylformylglycinamidine cyclo-ligase from Pectobacterium atrosepticum (strain SCRI 1043 / ATCC BAA-672) (Erwinia carotovora subsp. atroseptica).